Consider the following 251-residue polypeptide: Protein PBMUCL2 (251 aa).

The N-terminal stretch at 1–22 (MPRYVPLLLLLLLLRCSERGGG) is a signal peptide. Disordered regions lie at residues 36-55 (WRDG…DRAS) and 65-251 (LSQS…THLL). Over residues 72 to 87 (KHPETSPKDSRIREND) the composition is skewed to basic and acidic residues. Asn120 carries N-linked (GlcNAc...) asparagine glycosylation. Positions 150-164 (TKDSVTADPGTTENF) are enriched in polar residues. Positions 153 to 251 (SVTADPGTTE…TTKHGDTHLL (99 aa)) are 15 X 11 AA approximate repeats. Positions 241-251 (ETTKHGDTHLL) are enriched in basic and acidic residues.

In terms of tissue distribution, detected in the brain, lung, spleen, thymus and prostate.

The protein resides in the secreted. This Homo sapiens (Human) protein is Protein PBMUCL2 (HCG22).